Reading from the N-terminus, the 294-residue chain is Formamidopyrimidine-DNA glycosylase (294 aa).

Proline 2 functions as the Schiff-base intermediate with DNA in the catalytic mechanism. Residue glutamate 3 is the Proton donor of the active site. Lysine 58 serves as the catalytic Proton donor; for beta-elimination activity. DNA-binding residues include histidine 105, arginine 124, and lysine 167. The FPG-type zinc finger occupies 258 to 294 (QVYDREGEPCRTRGCKGTVKRFTQNGRSTFWCPSCQK). The active-site Proton donor; for delta-elimination activity is arginine 284.

It belongs to the FPG family. As to quaternary structure, monomer. Zn(2+) is required as a cofactor.

It carries out the reaction Hydrolysis of DNA containing ring-opened 7-methylguanine residues, releasing 2,6-diamino-4-hydroxy-5-(N-methyl)formamidopyrimidine.. It catalyses the reaction 2'-deoxyribonucleotide-(2'-deoxyribose 5'-phosphate)-2'-deoxyribonucleotide-DNA = a 3'-end 2'-deoxyribonucleotide-(2,3-dehydro-2,3-deoxyribose 5'-phosphate)-DNA + a 5'-end 5'-phospho-2'-deoxyribonucleoside-DNA + H(+). Functionally, involved in base excision repair of DNA damaged by oxidation or by mutagenic agents. Acts as a DNA glycosylase that recognizes and removes damaged bases. Has a preference for oxidized purines, such as 7,8-dihydro-8-oxoguanine (8-oxoG). Has AP (apurinic/apyrimidinic) lyase activity and introduces nicks in the DNA strand. Cleaves the DNA backbone by beta-delta elimination to generate a single-strand break at the site of the removed base with both 3'- and 5'-phosphates. This Afipia carboxidovorans (strain ATCC 49405 / DSM 1227 / KCTC 32145 / OM5) (Oligotropha carboxidovorans) protein is Formamidopyrimidine-DNA glycosylase.